Consider the following 207-residue polypeptide: Cytochrome c oxidase subunit 3 (207 aa).

A run of 5 helical transmembrane segments spans residues 28 to 48, 70 to 90, 102 to 122, 144 to 164, and 186 to 206; these read FLGFWLFLGGETVLFASLFAT, VVFMATMLLLTSSLTSVYAIY, LWFGITVLLGAGFLGLEIYEF, LVGTHGSHVAFGLLWILTLMI, and WHFIDVVWVFIFTVVYLMGMV.

It belongs to the cytochrome c oxidase subunit 3 family.

Its subcellular location is the cell membrane. The catalysed reaction is 4 Fe(II)-[cytochrome c] + O2 + 8 H(+)(in) = 4 Fe(III)-[cytochrome c] + 2 H2O + 4 H(+)(out). The protein is Cytochrome c oxidase subunit 3 (ctaE) of Bacillus sp. (strain PS3).